We begin with the raw amino-acid sequence, 706 residues long: MSGGKSGSRLSAYSHLKEIGKGGFGVVYAAQRENGEKVAIKRIDKKVPKNRVWTEIQTMKELKKSKYVVEFYEDFVEDGYTYIVMELCEGGSLQAYVREHGALDDATAVHVLRQLISAVSFMHRVNVIHRDLSAGNVFIKDSKKKKMTVKLGDFGLATTLGRGETTCTIVGTPGFIAPQVYDQEYTQSADVYSLGAVLYTMLTARNPPPKGLPPTCGMSPNAARLVEQMMDTDAKKRIPLTQIVLSEFMYENTNENAVIFSREHSRDGRRQRSREPVRSSRDDRSRDGRALIRSSSQPAHSGRAPLSNRPIHDRMPSTSSRGFDSERGRERDRDSGRGTVPPSREDRNRSQLWPIRMDRLEGQRVCTAGGRYIVELDTRCRFEVAAQGNFVKRILIVEVDEMVQTVYVHRIPDRTVRGRNGEEELITLTNNPFVYTSYSQMPKEVQNDYMRLQKMVAVTISGRVAKVTFRRPSQFPDAQAQLMENGDLRIKLPRSVIVRKMDNGEIFNCIDGIATQKQAVSGITLTKVNEVYKYLIRFEQCLNGMDRGMVCFPIVFSAGTNMVGSSPSSLMPSGSSQTSRFPFSNLSNNQPSLVPHSAPFLTKPTSSQRASSANVQRRVSTDENSSPSVAPSKYKIKIDPTTQKVRSIQATDGRVLRCSTSKADQFIFTDPAIRPDDQRFMRTDRVPDRASEMLHTLCERMRKLHQ.

The Protein kinase domain maps to 13 to 249; it reads YSHLKEIGKG…LTQIVLSEFM (237 aa). ATP-binding positions include 19–27 and Lys41; that span reads IGKGGFGVV. The active-site Proton acceptor is the Asp131. Basic and acidic residues-rich tracts occupy residues 261–290 and 323–336; these read SREH…DGRA and FDSE…RDSG. Disordered stretches follow at residues 261–351 and 566–632; these read SREH…NRSQ and SPSS…VAPS. The segment covering 566-579 has biased composition (low complexity); sequence SPSSLMPSGSSQTS. 2 stretches are compositionally biased toward polar residues: residues 580-592 and 603-629; these read RFPF…NQPS and KPTS…SPSV.

Belongs to the protein kinase superfamily. Ser/Thr protein kinase family. Interacts with sel-10. Probably ubiquitinated by the SCF(sel-10) and SCF(lin-23) E3 ubiquitin ligase complexes, leading to its proteasomal degradation.

The protein localises to the cytoplasm. It is found in the cytoskeleton. Its subcellular location is the microtubule organizing center. The protein resides in the centrosome. It localises to the centriole. The catalysed reaction is L-seryl-[protein] + ATP = O-phospho-L-seryl-[protein] + ADP + H(+). It catalyses the reaction L-threonyl-[protein] + ATP = O-phospho-L-threonyl-[protein] + ADP + H(+). In terms of biological role, protein kinase that plays a central role in centrosome duplication, control of centrosome size, spindle formation and nuclear envelope breakdown during cell divisions. Paternal copy is required to regulate synthesis of daughter centrioles prior to fertilization. Maternal copy regulates centrosome duplication during later cell cycles. Functions upstream of sas-5 and sas-6, and is required for their localization to the centrosome. Its role in nuclear envelope breakdown is mediated by the spindly-like protein spdl-1 and the RZZ complex, which in turn recruits the spindle checkpoint proteins mdf-1 and mdf-2, dynein and dynactin to unattached kinetochores. The protein is Probable serine/threonine-protein kinase zyg-1 of Caenorhabditis elegans.